Consider the following 123-residue polypeptide: MIQEQTMLNVADNSGARRVMCIKVLGGSHRRYAGVGDIIKITIKEAIPRGKVKKGDVLKAVVVRTRKGVRRPDGSVIRFDGNACVILNNNSEQPIGTRIFGPVTRELRTEKFMKIISLAPEVL.

It belongs to the universal ribosomal protein uL14 family. As to quaternary structure, part of the 50S ribosomal subunit. Forms a cluster with proteins L3 and L19. In the 70S ribosome, L14 and L19 interact and together make contacts with the 16S rRNA in bridges B5 and B8.

Functionally, binds to 23S rRNA. Forms part of two intersubunit bridges in the 70S ribosome. The polypeptide is Large ribosomal subunit protein uL14 (Erwinia tasmaniensis (strain DSM 17950 / CFBP 7177 / CIP 109463 / NCPPB 4357 / Et1/99)).